Reading from the N-terminus, the 480-residue chain is Transmembrane protein 161A (480 aa).

Positions 1-28 are cleaved as a signal peptide; that stretch reads MAVLGVQLVVTLFTATLMHRLAPHCSFA. Over 29–98 the chain is Extracellular; that stretch reads RWLLCNGSLF…LTAVDALVLR (70 aa). Residue Asn34 is glycosylated (N-linked (GlcNAc...) asparagine). A helical membrane pass occupies residues 99-119; sequence FFLEYQWFVDFAVYSVGVYLF. Residues 120–134 lie on the Cytoplasmic side of the membrane; the sequence is TEAYYFVLGPVQETN. The chain crosses the membrane as a helical span at residues 135-155; the sequence is IAVFWCLLTLAFSLKVFLMVT. Residues 156 to 166 lie on the Extracellular side of the membrane; sequence RLYFSTKEGGE. Residues 167-187 form a helical membrane-spanning segment; that stretch reads RSVCLSFAFLFLLLAMLVQVV. The Cytoplasmic segment spans residues 188–224; it reads REETLELGLEPGLASMTQHLEPILKKQDWDWTLPVIK. The helical transmembrane segment at 225-245 threads the bilayer; it reads LAIRLGLAVLGSLLGAFLIFP. The Extracellular segment spans residues 246 to 263; that stretch reads GLRLAQTHQDALTLSADR. The helical transmembrane segment at 264-284 threads the bilayer; it reads PLLQLLLHTSFLSPLCTLWLW. Topologically, residues 285 to 304 are cytoplasmic; sequence TKPVARDFLYQAPTRNMTFS. The chain crosses the membrane as a helical span at residues 305 to 325; that stretch reads VPSEGAFDSLRLWVLVALCLL. Topologically, residues 326–370 are extracellular; the sequence is RLAVTRPHLQAYLCLAKARVEQLRKEAGRIEAREIQQRVVRVYCY. The helical transmembrane segment at 371–391 threads the bilayer; the sequence is VTVVSLQYLTPLILTLHCTLL. At 392–450 the chain is on the cytoplasmic side; it reads LKTLGGYSWALSSTPPPLAPSQPSEALIPVDPAGDEAQQTAAQVAGILGGLLTPLFLRG. The helical transmembrane segment at 451–473 threads the bilayer; the sequence is MLAYIIWWTAACQLLSSLFGLYF. Residues 474–480 are Extracellular-facing; the sequence is HQHLAAS.

It belongs to the TMEM161 family.

It localises to the membrane. Functionally, may play a role in protection against oxidative stress. Overexpression leads to reduced levels of oxidant-induced DNA damage and apoptosis. This chain is Transmembrane protein 161A (Tmem161a), found in Mus musculus (Mouse).